Reading from the N-terminus, the 276-residue chain is Beta-lactamase OXA-1 (276 aa).

A signal peptide spans 1–25 (MKNTIHINFAIFLIIANIIYSSASA). Ser71 serves as the catalytic Acyl-ester intermediate. A beta-lactam is bound by residues Ser71, Lys74, Ser118, Thr216, and Ala218. Lys74 carries the post-translational modification N6-carboxylysine.

This sequence belongs to the class-D beta-lactamase family. In terms of assembly, monomer.

The protein localises to the periplasm. The enzyme catalyses a beta-lactam + H2O = a substituted beta-amino acid. Its activity is regulated as follows. Inhibited by penicillin sulfones. Only weakly inhibited by clavulanic acid and sulbactam. Class D beta-lactamase which confers resistance to the beta-lactam antibiotics, including amoxicillin and ticarcillin. Acts via hydrolysis of the beta-lactam ring. Has penicillin- and cephalosporin-hydrolyzing activities. In Escherichia coli, this protein is Beta-lactamase OXA-1.